The sequence spans 333 residues: MIDLRSDTVTRPSRAMLEAMMAAPVGDDVYGDDPTVNALQDYAAELSGKEAAIFLPTGTQANLVALLSHCERGEEYIVGQAAHNYLFEAGGAAVLGSIQPQPIDAAADGTLPLDKVAMKIKPDDIHFARTKLLSLENTHNGKVLPREYLKEAWEFTRERNLALHVDGARIFNAVVAYGCELKEITQYCDSFTICLSKGLGTPVGSLLVGNRDYIKRAIRWRKMTGGGMRQSGILAAAGIYALKNNVARLQEDHDNAAWMAEQLREAGADVMRQDTNMLFVRVGEENAAALGEYMKARNVLINASPIVRLVTHLDVSREQLAEVAAHWRAFLAR.

Lys-197 is subject to N6-(pyridoxal phosphate)lysine.

Belongs to the threonine aldolase family. Homotetramer. Pyridoxal 5'-phosphate serves as cofactor.

It catalyses the reaction L-threonine = acetaldehyde + glycine. The catalysed reaction is L-allo-threonine = acetaldehyde + glycine. In terms of biological role, catalyzes the cleavage of L-allo-threonine and L-threonine to glycine and acetaldehyde. L-threo-phenylserine and L-erythro-phenylserine are also good substrates. The protein is Low specificity L-threonine aldolase (ltaE) of Escherichia coli (strain K12).